A 213-amino-acid polypeptide reads, in one-letter code: Cytochrome b-c1 complex subunit Rieske, mitochondrial (213 aa).

The transit peptide at 1-29 (MSSLAFRTLRNGLGLKSSVRALSTTTTTL) directs the protein to the mitochondrion. The Mitochondrial matrix portion of the chain corresponds to 30 to 47 (SNYQQPDYSSYLNNKSGQ). Residues 48-77 (GSRNFTYFMVGSMGLLSAAGAKSTVEAFLS) traverse the membrane as a helical segment. Topologically, residues 78 to 213 (SFAASADVLA…FTDDETLLVG (136 aa)) are mitochondrial intermembrane. Residues 116 to 211 (RHRTADEIEE…YDFTDDETLL (96 aa)) form the Rieske domain. [2Fe-2S] cluster is bound by residues cysteine 156, histidine 158, cysteine 175, and histidine 178. Cysteine 161 and cysteine 177 are joined by a disulfide.

This sequence belongs to the Rieske iron-sulfur protein family. In terms of assembly, component of the ubiquinol-cytochrome c oxidoreductase (cytochrome b-c1 complex, complex III, CIII), a multisubunit enzyme composed of 10 subunits. The complex is composed of 3 respiratory subunits cytochrome b (COB), cytochrome c1 (CYT1) and Rieske protein (RIP1), 2 core protein subunits COR1 and QCR2, and 5 low-molecular weight protein subunits QCR6, QCR7, QCR8, QCR9 and QCR10. The complex exists as an obligatory dimer and forms supercomplexes (SCs) in the inner mitochondrial membrane with a monomer or a dimer of cytochrome c oxidase (complex IV, CIV), resulting in 2 different assemblies (supercomplexes III(2)IV and III(2)IV(2)). It depends on [2Fe-2S] cluster as a cofactor.

The protein localises to the mitochondrion inner membrane. The enzyme catalyses a quinol + 2 Fe(III)-[cytochrome c](out) = a quinone + 2 Fe(II)-[cytochrome c](out) + 2 H(+)(out). In terms of biological role, component of the ubiquinol-cytochrome c oxidoreductase, a multisubunit transmembrane complex that is part of the mitochondrial electron transport chain which drives oxidative phosphorylation. The complex plays an important role in the uptake of multiple carbon sources present in different host niches. The sequence is that of Cytochrome b-c1 complex subunit Rieske, mitochondrial from Candida albicans (strain SC5314 / ATCC MYA-2876) (Yeast).